Reading from the N-terminus, the 130-residue chain is Small ribosomal subunit protein uS8 (130 aa).

Belongs to the universal ribosomal protein uS8 family. Part of the 30S ribosomal subunit. Contacts proteins S5 and S12.

In terms of biological role, one of the primary rRNA binding proteins, it binds directly to 16S rRNA central domain where it helps coordinate assembly of the platform of the 30S subunit. The chain is Small ribosomal subunit protein uS8 from Pseudomonas fluorescens (strain ATCC BAA-477 / NRRL B-23932 / Pf-5).